The chain runs to 386 residues: Cytochrome b (386 aa).

A run of 4 helical transmembrane segments spans residues 32 to 52 (FGSLLALCLGIQIVTGVTLAM), 76 to 98 (WLIRYLHANTASAFFFLVYLHMG), 113 to 133 (TWNIGVVIFIVMIVTAFLGYV), and 179 to 199 (FFSLHYLLPFILAALVLMHLI). Residues His-82 and His-96 each contribute to the heme b site. Positions 183 and 197 each coordinate heme b. An a ubiquinone-binding site is contributed by His-202. Transmembrane regions (helical) follow at residues 226 to 246 (FLFKDLVTIFLFMLGLSIFVL), 290 to 310 (TLGVVAMLGAILILMALPYLD), 322 to 342 (LSKIAFYIFIANFLVLMILGA), and 349 to 369 (FIIFGQISTTLYFSYFIIITP).

This sequence belongs to the cytochrome b family. As to quaternary structure, fungal cytochrome b-c1 complex contains 10 subunits; 3 respiratory subunits, 2 core proteins and 5 low-molecular weight proteins. Cytochrome b-c1 complex is a homodimer. The cofactor is heme b.

It is found in the mitochondrion inner membrane. Functionally, component of the ubiquinol-cytochrome c reductase complex (complex III or cytochrome b-c1 complex) that is part of the mitochondrial respiratory chain. The b-c1 complex mediates electron transfer from ubiquinol to cytochrome c. Contributes to the generation of a proton gradient across the mitochondrial membrane that is then used for ATP synthesis. This is Cytochrome b (COB) from Trichophyton rubrum (Athlete's foot fungus).